Consider the following 150-residue polypeptide: MYSILIACLVLLLCLIIYVGHRADHARKYLEGMWHGDPVFLKQSGLQSFYLYIQPDHTCFFSVVNKNGEKLMETKIPCTITNKIYMFFKPIFEFHVVMEDIHSYFPKQFNFLLDSAEGKLILENNHVIYAVLYKDNFATALGKTVKKYIT.

An N-terminal signal peptide occupies residues 1-23; sequence MYSILIACLVLLLCLIIYVGHRA.

Belongs to the asfivirus EP152R family.

The protein localises to the virion. This is an uncharacterized protein from African swine fever virus (isolate Warthog/Namibia/Wart80/1980) (ASFV).